A 588-amino-acid polypeptide reads, in one-letter code: Schlafen family member 12-like (588 aa).

A helical membrane pass occupies residues 566–586; sequence IFLFVCLFRFCLFVCWFVCFF.

The protein belongs to the Schlafen family.

Its subcellular location is the membrane. The chain is Schlafen family member 12-like (SLFN12L) from Homo sapiens (Human).